Here is a 222-residue protein sequence, read N- to C-terminus: MHLTWLGHACVLLTGTKKVLIDPFIPEGSVAGTDPDLVLVTHGHFDHMGEAVTLKKPTVAIGELARYLQAKGVPAEGMNIGGTIESGGIMVTMTPALHTSGIDDPAGAGCAGTAAGFVVRMDGVCVYHAGDTGLFSDMKLIGELYHPDVALLPIGGRYTMGTKEAMVAAQFIGAKTVIPIHYNTWEKIAADANGFKTAIERSTDLSVFLLGPGESMDIPPSR.

This sequence belongs to the UPF0173 family.

This Methanoregula boonei (strain DSM 21154 / JCM 14090 / 6A8) protein is UPF0173 metal-dependent hydrolase Mboo_0816.